The following is a 117-amino-acid chain: Putative hydrolase fragment YghX (117 aa).

Positions 91–117 (DGLSSVGGYPGNDDKGRELQQQVDPTN) are disordered.

This Escherichia coli (strain K12) protein is Putative hydrolase fragment YghX (yghX).